We begin with the raw amino-acid sequence, 578 residues long: Laccase-10 (578 aa).

The N-terminal stretch at 1–29 (MGARCLALLLLYGTLLLLLLLPQLPLAGA) is a signal peptide. Plastocyanin-like domains lie at 37 to 153 (NVKL…PKAG) and 163 to 319 (KDVP…YAPP). Residues asparagine 42 and asparagine 83 are each glycosylated (N-linked (GlcNAc...) asparagine). 2 residues coordinate Cu cation: histidine 87 and histidine 89. An N-linked (GlcNAc...) asparagine glycan is attached at asparagine 119. Positions 132 and 134 each coordinate Cu cation. N-linked (GlcNAc...) asparagine glycosylation is found at asparagine 192, asparagine 208, asparagine 244, asparagine 307, asparagine 336, asparagine 384, asparagine 392, asparagine 402, asparagine 438, asparagine 445, asparagine 448, asparagine 451, and asparagine 461. In terms of domain architecture, Plastocyanin-like 3 spans 428–562 (DFPASPLEPF…KMAWVVNDGP (135 aa)). Residues histidine 479, histidine 482, histidine 484, histidine 541, cysteine 542, histidine 543, and histidine 547 each coordinate Cu cation.

The protein belongs to the multicopper oxidase family. The cofactor is Cu cation.

Its subcellular location is the secreted. It is found in the extracellular space. The protein resides in the apoplast. It catalyses the reaction 4 hydroquinone + O2 = 4 benzosemiquinone + 2 H2O. Its function is as follows. Lignin degradation and detoxification of lignin-derived products. This is Laccase-10 (LAC10) from Oryza sativa subsp. japonica (Rice).